Here is a 104-residue protein sequence, read N- to C-terminus: UPF0235 protein MTH_637 (104 aa).

This sequence belongs to the UPF0235 family.

This chain is UPF0235 protein MTH_637, found in Methanothermobacter thermautotrophicus (strain ATCC 29096 / DSM 1053 / JCM 10044 / NBRC 100330 / Delta H) (Methanobacterium thermoautotrophicum).